The primary structure comprises 440 residues: Adenosylhomocysteinase (440 aa).

Residues Thr-47, Asp-123, and Glu-148 each contribute to the substrate site. 149–151 contacts NAD(+); it reads TTT. Residues Lys-178 and Asp-182 each contribute to the substrate site. Residues Asn-183, 228 to 233, Glu-251, 307 to 309, and Asn-354 each bind NAD(+); these read GFGDVG and IGH.

The protein belongs to the adenosylhomocysteinase family. NAD(+) serves as cofactor.

It carries out the reaction S-adenosyl-L-homocysteine + H2O = L-homocysteine + adenosine. Its pathway is amino-acid biosynthesis; L-homocysteine biosynthesis; L-homocysteine from S-adenosyl-L-homocysteine: step 1/1. Functionally, adenosylhomocysteine is a competitive inhibitor of S-adenosyl-L-methionine-dependent methyl transferase reactions; therefore adenosylhomocysteinase may play a key role in the control of methylations via regulation of the intracellular concentration of adenosylhomocysteine. This is Adenosylhomocysteinase (SAHH) from Pneumocystis carinii.